The primary structure comprises 373 residues: Transaminase AMT5-2 (373 aa).

Arg-92 provides a ligand contact to pyridoxal 5'-phosphate. Lys-196 carries the N6-(pyridoxal phosphate)lysine modification. Glu-232 is a pyridoxal 5'-phosphate binding site.

It belongs to the class-IV pyridoxal-phosphate-dependent aminotransferase family. Pyridoxal 5'-phosphate serves as cofactor.

It participates in mycotoxin biosynthesis. Transaminase; part of the gene clusters that mediate the biosynthesis of AM-toxins, host-selective toxins (HSTs) causing Alternaria blotch on apple, a worldwide distributed disease. AM-toxins are cyclic depsipeptides containing the 3 residues 2-hydroxy-isovaleric acid (2-HIV), dehydroalanine, L-alanine which are common for all 3 AM-toxins I to III. The fourth precursor is L-alpha-amino-methoxyphenyl-valeric acid (L-Amv) for AM-toxin I, L-alpha-amino-phenyl-valeric acid (L-Apv) for AM-toxin II, and L-alpha-amino-hydroxyphenyl-valeric acid (L-Ahv) for AM-toxin III. AM-toxins have two target sites for affecting susceptible apple cells; they cause invagination of the plasma membrane and electrolyte loss and chloroplast disorganization. The non-ribosomal peptide synthetase AMT1 contains 4 catalytic modules and is responsible for activation of each residue in AM-toxin. The aldo-keto reductase AMT2 catalyzes the conversion of 2-keto-isovaleric acid (2-KIV) to 2-hydroxy-isovaleric acid (2-HIV), one of the precursor residues incorporated by AMT1 during AM-toxin biosynthesis, by reduction of its ketone to an alcohol. The cytochrome P450 monooxygenase AMT3 and the thioesterase AMT4 are also important for AM-toxin production, but their exact function within the AM-toxin biosynthesis are not known yet. Up to 21 proteins (including AMT1 to AMT4) are predicted to be involved in AM-toxin biosynthesis since their expression ishighly up-regulated in AM-toxin-producing cultures. The protein is Transaminase AMT5-2 of Alternaria alternata (Alternaria rot fungus).